We begin with the raw amino-acid sequence, 343 residues long: D-beta-hydroxybutyrate dehydrogenase, mitochondrial (343 aa).

The transit peptide at 1–46 (MLAARLSRPLSQLPGKALSVRDRENGTRHTLLFYPASFSPDTRRTY) directs the protein to the mitochondrion. Residue 60 to 84 (ITGCDSGFGFSLAKHLHSKGFLVFA) coordinates NAD(+). K73 and K97 each carry N6-acetyllysine. N6-acetyllysine; alternate is present on K103. An N6-succinyllysine; alternate modification is found at K103. An N6-acetyllysine mark is found at K132 and K177. M196 lines the substrate pocket. C209 functions as the Proton acceptor in the catalytic mechanism. At K212 the chain carries N6-acetyllysine. S219 carries an O-linked (GlcNAc) serine glycan. S246 is modified (phosphoserine). Position 258 is an N6-acetyllysine (K258). At K259 the chain carries N6-acetyllysine; alternate. K259 carries the post-translational modification N6-succinyllysine; alternate. K280 carries the post-translational modification N6-acetyllysine.

This sequence belongs to the short-chain dehydrogenases/reductases (SDR) family. Homotetramer. Acetylation of Lys-132 is observed in liver mitochondria from fasted mice but not from fed mice.

It localises to the mitochondrion inner membrane. Its subcellular location is the mitochondrion matrix. The catalysed reaction is (R)-3-hydroxybutanoate + NAD(+) = acetoacetate + NADH + H(+). With respect to regulation, requires phosphatidylcholine as an allosteric activator for enzymatic activity. The protein is D-beta-hydroxybutyrate dehydrogenase, mitochondrial of Mus musculus (Mouse).